Reading from the N-terminus, the 645-residue chain is Acetyl-coenzyme A synthetase 2 (645 aa).

CoA-binding positions include 190-193 (RGGK), Thr-308, and Asn-332. ATP contacts are provided by residues 384–386 (GEP), 408–413 (DTWWQT), Asp-497, and Arg-512. Residue Ser-520 coordinates CoA. Residue Arg-523 participates in ATP binding. Mg(2+) contacts are provided by Val-534, His-536, and Val-539. Lys-606 carries the N6-acetyllysine modification.

It belongs to the ATP-dependent AMP-binding enzyme family. Requires Mg(2+) as cofactor. Acetylated. Deacetylation by the SIR2-homolog deacetylase activates the enzyme.

The enzyme catalyses acetate + ATP + CoA = acetyl-CoA + AMP + diphosphate. In terms of biological role, catalyzes the conversion of acetate into acetyl-CoA (AcCoA), an essential intermediate at the junction of anabolic and catabolic pathways. AcsA undergoes a two-step reaction. In the first half reaction, AcsA combines acetate with ATP to form acetyl-adenylate (AcAMP) intermediate. In the second half reaction, it can then transfer the acetyl group from AcAMP to the sulfhydryl group of CoA, forming the product AcCoA. The sequence is that of Acetyl-coenzyme A synthetase 2 from Pseudomonas aeruginosa (strain ATCC 15692 / DSM 22644 / CIP 104116 / JCM 14847 / LMG 12228 / 1C / PRS 101 / PAO1).